The primary structure comprises 641 residues: Tegument protein UL35 (641 aa).

3 disordered regions span residues 353–373 (ERGE…PREA), 500–572 (ASSS…PRQR), and 587–641 (AYSH…LRHL). Positions 358-367 (GDEDEEQEND) are enriched in acidic residues. Positions 500–563 (ASSSSASSSS…LSGSHGISSA (64 aa)) are enriched in low complexity. Residues 589–599 (SHHRRHRRRRS) show a composition bias toward basic residues. Residues 632-641 (DDLAENLRHL) are compositionally biased toward basic and acidic residues.

It belongs to the herpesviridae pp85 family. As to quaternary structure, interacts with UL82. Interacts with isoform UL35A. Interacts with host UBP7; this interaction significantly inhibits the ability of USP7 to form nuclear bodies. Interacts with host DCAF1 (via C-terminus). Interacts with host SNX5; this interaction allows proper gB localization during viral assembly. Interacts with host TBK1; this interaction prevents type I interferon production. In terms of assembly, interacts with UL82. Interacts with isoform UL35. Interacts with host UBP7; this interaction significantly inhibits the ability of USP7 to form nuclear bodies. Interacts with host SNX5; this interaction allows proper gB localization during viral assembly.

Its subcellular location is the virion tegument. It is found in the host nucleus. The protein localises to the host cytoplasm. Functionally, plays important role in immediate-early gene expression through interaction with UL82. Forms nuclear bodies in host nucleus, independently of PML. In turn, UL35 nuclear bodies associate with and remodel PML bodies. Through interaction with host DCAF1, causes cells to accumulate in the G2 phase of the cell cycle by inducing a DNA damage response. Regulates viral assembly by controlling the localization of the essential gB through regulation of a retrograde transport pathway. This modulation occurs via binding and inhibition of host sorting nexin 5/SNX5. Also plays a role in the inhibition of pattern recognition receptor-mediated type I interferon signaling at the level of TBK1. Its function is as follows. Promotes cytoplasmic UL82 accumulation and inhibits UL35-containing nuclear bodies formation. Regulates viral assembly by controlling the localization of the essential gB through regulation of a retrograde transport pathway. This modulation occurs via binding and inhibition of host sorting nexin 5/SNX5. The chain is Tegument protein UL35 (UL35) from Homo sapiens (Human).